Here is a 492-residue protein sequence, read N- to C-terminus: MQTNKQPKQQFSEKQFIAFVFNYIAGFGFISVVMTMFDVGPFSYLVLGLTSFAILGVVLSFSRLSVLCGNSAYGGSYLIAKKAVGTNSKTKRFFVFLSGWNVSLTGSFNGVVIPAVLIFSFADIPVVKANNNIIIGLLVGGFLLFGLLTFISLFGLKINKKAIFYFAVIKWIVVIGGFILGIYLIGTTNGKGFVENNLIGTRENIDFFKIIFISLALTIAFAGTEDLASITPDVKSNNLRKCFLIAFGCVVLLYLVGFVIISGLDGIRGYGLALGNKDPKAINNYGSIYRLVGGVPLLVIYGLGLLVNSLASRLSMTITTARKYVALAQDGFLPSFLAKTNKHNEYHHAVLISNLMTLLVMLIMVIIPFLPDHNNNNNSLFNAIEQLVTVTIEMAAAISLIQYFITFIFFFMIFAKKENQKLIPLWEKVSYVISFALVSVLLFVPLFPFNQWTVFNTFKIVVLICFYLLGVGFFGYAEWKNKNKYQLMNNNS.

A run of 12 helical transmembrane segments spans residues 16-36, 39-59, 107-127, 133-153, 162-182, 210-230, 243-263, 291-311, 350-370, 394-414, 429-449, and 454-474; these read FIAFVFNYIAGFGFISVVMTM, VGPFSYLVLGLTSFAILGVVL, SFNGVVIPAVLIFSFADIPVV, IIIGLLVGGFLLFGLLTFISL, AIFYFAVIKWIVVIGGFILGI, IIFISLALTIAFAGTEDLASI, FLIAFGCVVLLYLVGFVIISG, LVGGVPLLVIYGLGLLVNSLA, VLISNLMTLLVMLIMVIIPFL, MAAAISLIQYFITFIFFFMIF, VSYVISFALVSVLLFVPLFPF, and VFNTFKIVVLICFYLLGVGFF.

It to M.genitalium MG225.

The protein localises to the cell membrane. This is an uncharacterized protein from Mycoplasma genitalium (strain ATCC 33530 / DSM 19775 / NCTC 10195 / G37) (Mycoplasmoides genitalium).